The sequence spans 250 residues: 2,3-bisphosphoglycerate-dependent phosphoglycerate mutase (250 aa).

Residues 10-17 (RHGESQWN), 23-24 (TG), Arg62, 89-92 (ERHY), Lys100, 116-117 (RR), and 185-186 (GN) each bind substrate. His11 acts as the Tele-phosphohistidine intermediate in catalysis. Glu89 functions as the Proton donor/acceptor in the catalytic mechanism.

Belongs to the phosphoglycerate mutase family. BPG-dependent PGAM subfamily. As to quaternary structure, homodimer.

The enzyme catalyses (2R)-2-phosphoglycerate = (2R)-3-phosphoglycerate. Its pathway is carbohydrate degradation; glycolysis; pyruvate from D-glyceraldehyde 3-phosphate: step 3/5. In terms of biological role, catalyzes the interconversion of 2-phosphoglycerate and 3-phosphoglycerate. This chain is 2,3-bisphosphoglycerate-dependent phosphoglycerate mutase, found in Erwinia tasmaniensis (strain DSM 17950 / CFBP 7177 / CIP 109463 / NCPPB 4357 / Et1/99).